Consider the following 382-residue polypeptide: 1-deoxy-D-xylulose 5-phosphate reductoisomerase (382 aa).

NADPH-binding residues include T11, G12, S13, I14, and N123. K124 provides a ligand contact to 1-deoxy-D-xylulose 5-phosphate. E125 contacts NADPH. D149 lines the Mn(2+) pocket. The 1-deoxy-D-xylulose 5-phosphate site is built by S150, E151, S173, and H196. A Mn(2+)-binding site is contributed by E151. G202 is an NADPH binding site. 1-deoxy-D-xylulose 5-phosphate contacts are provided by S209, N214, K215, and E218. E218 is a Mn(2+) binding site.

The protein belongs to the DXR family. Mg(2+) is required as a cofactor. Requires Mn(2+) as cofactor.

It carries out the reaction 2-C-methyl-D-erythritol 4-phosphate + NADP(+) = 1-deoxy-D-xylulose 5-phosphate + NADPH + H(+). The protein operates within isoprenoid biosynthesis; isopentenyl diphosphate biosynthesis via DXP pathway; isopentenyl diphosphate from 1-deoxy-D-xylulose 5-phosphate: step 1/6. Catalyzes the NADPH-dependent rearrangement and reduction of 1-deoxy-D-xylulose-5-phosphate (DXP) to 2-C-methyl-D-erythritol 4-phosphate (MEP). The sequence is that of 1-deoxy-D-xylulose 5-phosphate reductoisomerase from Phocaeicola vulgatus (strain ATCC 8482 / DSM 1447 / JCM 5826 / CCUG 4940 / NBRC 14291 / NCTC 11154) (Bacteroides vulgatus).